A 1358-amino-acid chain; its full sequence is Nonribosomal peptide synthetase rstn8 (1358 aa).

The interval M1 to D23 is disordered. The interval Y261–Q659 is adenylation. Residues E795 to V872 enclose the Carrier domain. S832 is subject to O-(pantetheine 4'-phosphoryl)serine. A condensation region spans residues E909–L1322.

Belongs to the NRP synthetase family. The cofactor is pantetheine 4'-phosphate.

It carries out the reaction restrictinol + glycine + H(+) = restricticin + H2O. The protein operates within antifungal biosynthesis. Functionally, nonribosomal peptide synthetase; part of the gene cluster that mediates the biosynthesis of the tetrahydropyranyl antifungal agent restricticin that acts as an inhibitor of CYP51 and blocks the ergosterol biosynthesis. Within the pathway, rstn8 catalyzes the C3 esterification of restrictinol with glycine to yield restricticin. Rstn8 represents an example of the emerging class of single-module NRPS-like enzymes that perform esterification reactions. Rstn8 displays strict substrate specificity toward glycine as no other natural amino acid is accepted. Rstn8 does not recognize desmethylrestrictinol as a substrate, demonstrating that rstn1-catalyzed methylation, possibly protecting the C4-OH, must precede the final esterification step. The highly reducing polyketide synthase rstn3, the short chain dehydrogenase rstn4, the cyclase rstn5, the FAD-dependent monooxygenase rstn6 and the enoylreductase rstn7 are required to generate the first stable intermediate desmethylrestrictinol. Rstn3 with rstn7 biosynthesize the first polyketide chain intermediate that is reduced by rstn4, followed by epoxidation by rstn6 before 6-endo cyclization via epoxide opening by rstn5 leads to desmethylrestrictinol. The methyltransferase rstn1 then catalyzes the C4 O-methylation of desmethylrestrictinol to produce restrictinol, and the nonribosomal peptide synthetase rstn8 catalyzes the C3 esterification of restrictinol with glycine that leads to restricticin. In Aspergillus nomiae NRRL (strain ATCC 15546 / NRRL 13137 / CBS 260.88 / M93), this protein is Nonribosomal peptide synthetase rstn8.